The chain runs to 138 residues: MLDRLDAALRFQQEALNLRAQRQEILAANIANADTPGYQARDIDFASELKKVMVRGREETGGVALTLTSSHHIPAQAVSSPAVDLLYRVPDQPSLDGNTVDMDRERTQFADNSLKYQMGLTVLGSQLKGMMNVLQGGN.

This sequence belongs to the flagella basal body rod proteins family. As to quaternary structure, the basal body constitutes a major portion of the flagellar organelle and consists of a number of rings mounted on a central rod. In Gram-negative bacteria, at least four rings, L, P, S and M are present, whereas Gram-positive bacteria lack the L and P rings. The rod consists of about 26 subunits of FlgG in the distal portion, and FlgB, FlgC and FlgF build up the proximal portion of the rod with about 6 subunits each. Rod assembly occurs by export via the flagellum-specific pathway of its constituent proteins and by their incorporation into the rod structure in the probable order of FlgB, FlgC, FlgF and FlgG. Another protein, FliE, also assembles onto the stable rod structure. Interacts with FliE and peptidoglycan hydrolase FlgJ (via N-terminus), which seems to function as a scaffold or cap for rod assembly.

The protein resides in the bacterial flagellum basal body. Its function is as follows. Structural component of flagellum, the bacterial motility apparatus. Part of the rod structure of flagellar basal body. The sequence is that of Flagellar basal body rod protein FlgB (flgB) from Salmonella typhimurium (strain LT2 / SGSC1412 / ATCC 700720).